A 317-amino-acid polypeptide reads, in one-letter code: MSGSIDTLALKEEDVTKFLACASHLGANNVDFQMEQYVYKRRPDGTSIINVRKTWEKVLLAARAIAAIENPADICVISARPYGQRAVLKFAHYTGATPIAGRFTPGTFTNQIQTAFREPRLLVVTDPYTDHQPVTEASYVNIPVIALTNTDSPLKYVDIAIPCNNKSIHSVGLMWWMLAREVLRLRGTISREVPWEVMVDLFFYRDPEEAEKEAQAEQAAAEKDKAPKEEFTADQAFTAPGTEVSDWASEVPVAPVPILAGGVDAATTEDWSVPAQSDWTAPAANPANAAAAGAPAPAPAAATTTESWGGSGAENWG.

The disordered stretch occupies residues 277 to 317 (SDWTAPAANPANAAAAGAPAPAPAAATTTESWGGSGAENWG). Low complexity predominate over residues 281 to 302 (APAANPANAAAAGAPAPAPAAA).

Belongs to the universal ribosomal protein uS2 family. In terms of assembly, component of the small ribosomal subunit. Mature ribosomes consist of a small (40S) and a large (60S) subunit. The 40S subunit contains about 33 different proteins and 1 molecule of RNA (18S). The 60S subunit contains about 49 different proteins and 3 molecules of RNA (28S, 5.8S and 5S). Interacts with ribosomal protein S21.

It is found in the cytoplasm. Functionally, required for the assembly and/or stability of the 40S ribosomal subunit. Required for the processing of the 20S rRNA-precursor to mature 18S rRNA in a late step of the maturation of 40S ribosomal subunits. The sequence is that of Small ribosomal subunit protein uS2 from Urechis caupo (Innkeeper worm).